Here is a 209-residue protein sequence, read N- to C-terminus: Pyrrolidone-carboxylate peptidase (209 aa).

Catalysis depends on residues glutamate 79, cysteine 142, and histidine 164.

Belongs to the peptidase C15 family. As to quaternary structure, homotetramer.

Its subcellular location is the cytoplasm. It catalyses the reaction Release of an N-terminal pyroglutamyl group from a polypeptide, the second amino acid generally not being Pro.. In terms of biological role, removes 5-oxoproline from various penultimate amino acid residues except L-proline. In Saccharolobus islandicus (strain L.S.2.15 / Lassen #1) (Sulfolobus islandicus), this protein is Pyrrolidone-carboxylate peptidase.